Here is a 130-residue protein sequence, read N- to C-terminus: Small ribosomal subunit protein uS8 (130 aa).

Belongs to the universal ribosomal protein uS8 family. Part of the 30S ribosomal subunit. Contacts proteins S5 and S12.

One of the primary rRNA binding proteins, it binds directly to 16S rRNA central domain where it helps coordinate assembly of the platform of the 30S subunit. The sequence is that of Small ribosomal subunit protein uS8 from Klebsiella pneumoniae subsp. pneumoniae (strain ATCC 700721 / MGH 78578).